We begin with the raw amino-acid sequence, 560 residues long: Membrane protein insertase YidC (560 aa).

6 helical membrane passes run 5–25, 334–354, 357–377, 431–451, 476–496, and 522–542; these read IINL…WQYF, AIDF…MNFF, YVGN…LLMF, LPIL…YVTI, LFGL…WPIL, and FMPL…LIYW.

This sequence belongs to the OXA1/ALB3/YidC family. Type 1 subfamily. In terms of assembly, interacts with the Sec translocase complex via SecD. Specifically interacts with transmembrane segments of nascent integral membrane proteins during membrane integration.

The protein localises to the cell inner membrane. Required for the insertion and/or proper folding and/or complex formation of integral membrane proteins into the membrane. Involved in integration of membrane proteins that insert both dependently and independently of the Sec translocase complex, as well as at least some lipoproteins. Aids folding of multispanning membrane proteins. The polypeptide is Membrane protein insertase YidC (Rickettsia akari (strain Hartford)).